The following is a 398-amino-acid chain: Dihydrolipoyllysine-residue succinyltransferase component of 2-oxoglutarate dehydrogenase complex (398 aa).

The Lipoyl-binding domain occupies 2-77 (SIKIIIPSLG…TVGEEVGEIN (76 aa)). Lys-43 is subject to N6-lipoyllysine. One can recognise a Peripheral subunit-binding (PSBD) domain in the interval 112–149 (ILAPSVQKLVTENKLDPNNIKGTGRGGRITKYDVLETI). Active-site residues include His-369 and Asp-373.

It belongs to the 2-oxoacid dehydrogenase family. As to quaternary structure, forms a 24-polypeptide structural core with octahedral symmetry. Part of the 2-oxoglutarate dehydrogenase (OGDH) complex composed of E1 (2-oxoglutarate dehydrogenase), E2 (dihydrolipoamide succinyltransferase) and E3 (dihydrolipoamide dehydrogenase); the complex contains multiple copies of the three enzymatic components (E1, E2 and E3). The cofactor is (R)-lipoate.

The catalysed reaction is N(6)-[(R)-dihydrolipoyl]-L-lysyl-[protein] + succinyl-CoA = N(6)-[(R)-S(8)-succinyldihydrolipoyl]-L-lysyl-[protein] + CoA. Its pathway is amino-acid degradation; L-lysine degradation via saccharopine pathway; glutaryl-CoA from L-lysine: step 6/6. In terms of biological role, E2 component of the 2-oxoglutarate dehydrogenase (OGDH) complex which catalyzes the second step in the conversion of 2-oxoglutarate to succinyl-CoA and CO(2). This Rickettsia typhi (strain ATCC VR-144 / Wilmington) protein is Dihydrolipoyllysine-residue succinyltransferase component of 2-oxoglutarate dehydrogenase complex (sucB).